The primary structure comprises 1331 residues: Lysine-specific demethylase 3A-A (1331 aa).

Disordered stretches follow at residues 243-280 (LNDK…PSKD), 358-381 (TPPQ…TQNL), and 497-532 (KVVK…VTYP). Basic and acidic residues predominate over residues 266–280 (TELKQTRNEEVPSKD). The C6-type zinc-finger motif lies at 683-708 (CDACDTTIFNLHWVCPKCGFGVCVDC). The short motif at 894–898 (LRNLL) is the LXXLL motif element. Residues 1086-1291 (RREGKLNLAA…HCFWLTQEFR (206 aa)) form the JmjC domain. 3 residues coordinate Fe cation: H1130, D1132, and H1259.

This sequence belongs to the JHDM2 histone demethylase family. The cofactor is Fe(2+).

It localises to the cytoplasm. The protein resides in the nucleus. It catalyses the reaction N(6),N(6)-dimethyl-L-lysyl(9)-[histone H3] + 2 2-oxoglutarate + 2 O2 = L-lysyl(9)-[histone H3] + 2 formaldehyde + 2 succinate + 2 CO2. Histone demethylase that specifically demethylates 'Lys-9' of histone H3, thereby playing a central role in histone code. Preferentially demethylates mono- and dimethylated H3 'Lys-9' residue, with a preference for dimethylated residue, while it has weak or no activity on trimethylated H3 'Lys-9'. Demethylation of Lys residue generates formaldehyde and succinate. The chain is Lysine-specific demethylase 3A-A (kdm3a-a) from Xenopus laevis (African clawed frog).